We begin with the raw amino-acid sequence, 619 residues long: Pentatricopeptide repeat-containing protein At3g22470, mitochondrial (619 aa).

Residues 1-28 constitute a mitochondrion transit peptide; the sequence is MIQRLIPLNRKASNFTQILEKGTSLLHY. PPR repeat units follow at residues 69–103, 104–138, 139–173, 174–208, 209–243, 244–278, 279–313, 314–348, 349–383, 384–418, 419–453, 454–488, 489–523, 524–558, and 559–593; these read TPID…GIEH, DMYT…GYEP, DTIT…KQRP, DLVT…GFQP, DEVT…NIKA, SVVQ…GIKA, DVVT…NIIP, DVVT…GIAP, DTIT…GCEP, DIVT…GLIP, NTIT…GVPP, SVVT…RMTL, GIGI…GVKP, DVVT…GCTP, and DDFT…GFSA.

This sequence belongs to the PPR family. P subfamily.

The protein localises to the mitochondrion. This Arabidopsis thaliana (Mouse-ear cress) protein is Pentatricopeptide repeat-containing protein At3g22470, mitochondrial.